Consider the following 404-residue polypeptide: NADH-quinone oxidoreductase subunit D 2 (404 aa).

This sequence belongs to the complex I 49 kDa subunit family. NDH-1 is composed of 14 different subunits. Subunits NuoB, C, D, E, F, and G constitute the peripheral sector of the complex.

The protein localises to the cell inner membrane. The enzyme catalyses a quinone + NADH + 5 H(+)(in) = a quinol + NAD(+) + 4 H(+)(out). Its function is as follows. NDH-1 shuttles electrons from NADH, via FMN and iron-sulfur (Fe-S) centers, to quinones in the respiratory chain. The immediate electron acceptor for the enzyme in this species is believed to be ubiquinone. Couples the redox reaction to proton translocation (for every two electrons transferred, four hydrogen ions are translocated across the cytoplasmic membrane), and thus conserves the redox energy in a proton gradient. This is NADH-quinone oxidoreductase subunit D 2 from Sinorhizobium medicae (strain WSM419) (Ensifer medicae).